Reading from the N-terminus, the 151-residue chain is Inorganic triphosphatase (151 aa).

Residues 1–148 (MTEIERKFLV…KRYKNKALAL (148 aa)) form the CYTH domain. Tyrosine 27 functions as the Proton acceptor in the catalytic mechanism.

In terms of assembly, homodimer.

It carries out the reaction triphosphate + H2O = phosphate + diphosphate. Its activity is regulated as follows. Activated by magnesium and mangenese ions, and inhibited by calcium, zinc and copper ions. Its function is as follows. Involved in the hydrolysis of the beta-gamma-phosphoanhydride linkage of triphosphate-containing substrates (inorganic or nucleoside-linked). Catalyzes the hydrolysis of inorganic triphosphate (PPPi). The enzyme has a strong preference for linear PPPi compared with cyclic PPPi (cyclic trimetaphosphate) and to the linear P4. The longer chains polyphosphate are not hydrolyzed. It has only a slight thiamine triphosphatase (ThTPase) activity. Nucleoside triphosphatase activity is negligible in the presence of magnesium, but a small activity is observed in the presence of manganese, in particular with GTP. This is Inorganic triphosphatase from Nitrosomonas europaea (strain ATCC 19718 / CIP 103999 / KCTC 2705 / NBRC 14298).